The sequence spans 69 residues: Mu-conotoxin-like Am3.3 (69 aa).

An N-terminal signal peptide occupies residues 1-20; the sequence is MMSKLGVLLTICLLLFPLTA. The propeptide occupies 21–52; the sequence is VPLDGDQPADRPAERMQDDISSENHPMFDAIR. Cysteine 68 bears the Cysteine amide mark.

It belongs to the conotoxin M family. Is not hydroxylated. Post-translationally, contains 3 disulfide bonds. In terms of tissue distribution, expressed by the venom duct.

The protein localises to the secreted. Its function is as follows. Mu-conotoxins block voltage-gated sodium channels (Nav). This Conus amadis (Amadis cone) protein is Mu-conotoxin-like Am3.3.